The primary structure comprises 292 residues: Peroxisomal 2,4-dienoyl-CoA reductase SPS19 [(3E)-enoyl-CoA-producing] (292 aa).

3 residues coordinate NADP(+): isoleucine 36, aspartate 85, and lysine 145. Catalysis depends on serine 162, which acts as the Proton donor. Position 180 (lysine 180) interacts with NADP(+). Residue lysine 180 is the Lowers pKa of active site Tyr of the active site. Lysine 188 participates in a covalent cross-link: Glycyl lysine isopeptide (Lys-Gly) (interchain with G-Cter in ubiquitin). Position 209 (isoleucine 209) interacts with NADP(+). The Microbody targeting signal motif lies at 290-292 (SKL).

It belongs to the short-chain dehydrogenases/reductases (SDR) family. In terms of assembly, homodimer.

It is found in the peroxisome. It catalyses the reaction a (2E,4Z)-dienoyl-CoA + NADPH + H(+) = a 4,5-saturated-(3E)-enoyl-CoA + NADP(+). It carries out the reaction a (2E,4E)-dienoyl-CoA + NADPH + H(+) = a 4,5-saturated-(3E)-enoyl-CoA + NADP(+). Auxiliary enzyme of beta-oxidation. Participates in the degradation of unsaturated fatty enoyl-CoA esters having double bonds in both even- and odd-numbered positions in peroxisome. Catalyzes the NADP-dependent reduction of 2,4-dienoyl-CoA to yield trans-3-enoyl-CoA. Dispensable for growth and sporulation on solid acetate and oleate media, but is essential for these processes to occur on petroselineate. The polypeptide is Peroxisomal 2,4-dienoyl-CoA reductase SPS19 [(3E)-enoyl-CoA-producing] (SPS19) (Saccharomyces cerevisiae (strain ATCC 204508 / S288c) (Baker's yeast)).